The primary structure comprises 158 residues: uncharacterized protein (158 aa).

The HTH hxlR-type domain occupies 13–110 (ESVGRALELV…WGDEYLPRPE (98 aa)).

This is an uncharacterized protein from Mycobacterium tuberculosis (strain ATCC 25618 / H37Rv).